Reading from the N-terminus, the 314-residue chain is Transmembrane protein 248 (314 aa).

The helical transmembrane segment at 21-41 threads the bilayer; it reads VVFMISVSAMAIAFLTLGYFF. The segment at 78–106 is disordered; it reads LTNDTTTPESTMTSGQARASTQSPQALED. Residues 80-102 show a composition bias toward polar residues; that stretch reads NDTTTPESTMTSGQARASTQSPQ. The next 3 membrane-spanning stretches (helical) occupy residues 179–199, 236–258, and 270–290; these read QVVF…PVTV, FWCY…TVIV, and LMHT…YAVI.

The protein belongs to the TMEM248 family.

It is found in the membrane. The chain is Transmembrane protein 248 (TMEM248) from Homo sapiens (Human).